A 201-amino-acid chain; its full sequence is Chromophore lyase CpcT/CpeT (201 aa).

The protein belongs to the CpcT/CpeT biliprotein lyase family.

The protein resides in the plastid. It is found in the organellar chromatophore. Its function is as follows. Covalently attaches a chromophore to Cys residue(s) of phycobiliproteins. The protein is Chromophore lyase CpcT/CpeT of Paulinella chromatophora.